We begin with the raw amino-acid sequence, 219 residues long: Ribosomal RNA large subunit methyltransferase E (219 aa).

Positions 60, 62, 80, 96, and 120 each coordinate S-adenosyl-L-methionine. Lys160 acts as the Proton acceptor in catalysis.

Belongs to the class I-like SAM-binding methyltransferase superfamily. RNA methyltransferase RlmE family.

The protein resides in the cytoplasm. The catalysed reaction is uridine(2552) in 23S rRNA + S-adenosyl-L-methionine = 2'-O-methyluridine(2552) in 23S rRNA + S-adenosyl-L-homocysteine + H(+). Specifically methylates the uridine in position 2552 of 23S rRNA at the 2'-O position of the ribose in the fully assembled 50S ribosomal subunit. This Acidithiobacillus ferrooxidans (strain ATCC 23270 / DSM 14882 / CIP 104768 / NCIMB 8455) (Ferrobacillus ferrooxidans (strain ATCC 23270)) protein is Ribosomal RNA large subunit methyltransferase E.